The following is a 189-amino-acid chain: Putative manganese efflux pump MntP (189 aa).

Transmembrane regions (helical) follow at residues 3–23 (PVSLIFLAFAMSTDAFAAAIG), 41–61 (IIFGVIEAITPLVGWLLGQAA), 65–85 (VADWDHWIAFVLLVLLGLHMI), 106–128 (WILAVTALATSIDALAVGVGLAF), 141–161 (GLATMTMVTLGTMLGRALGAV), and 168–188 (MVGGVVLILVGATILYEHLSA).

Belongs to the MntP (TC 9.B.29) family.

It localises to the cell inner membrane. Functionally, probably functions as a manganese efflux pump. The sequence is that of Putative manganese efflux pump MntP from Pseudomonas aeruginosa (strain UCBPP-PA14).